We begin with the raw amino-acid sequence, 476 residues long: Aspartyl/glutamyl-tRNA(Asn/Gln) amidotransferase subunit B (476 aa).

It belongs to the GatB/GatE family. GatB subfamily. In terms of assembly, heterotrimer of A, B and C subunits.

It carries out the reaction L-glutamyl-tRNA(Gln) + L-glutamine + ATP + H2O = L-glutaminyl-tRNA(Gln) + L-glutamate + ADP + phosphate + H(+). The catalysed reaction is L-aspartyl-tRNA(Asn) + L-glutamine + ATP + H2O = L-asparaginyl-tRNA(Asn) + L-glutamate + ADP + phosphate + 2 H(+). Allows the formation of correctly charged Asn-tRNA(Asn) or Gln-tRNA(Gln) through the transamidation of misacylated Asp-tRNA(Asn) or Glu-tRNA(Gln) in organisms which lack either or both of asparaginyl-tRNA or glutaminyl-tRNA synthetases. The reaction takes place in the presence of glutamine and ATP through an activated phospho-Asp-tRNA(Asn) or phospho-Glu-tRNA(Gln). The protein is Aspartyl/glutamyl-tRNA(Asn/Gln) amidotransferase subunit B of Enterococcus faecalis (strain ATCC 700802 / V583).